Here is a 167-residue protein sequence, read N- to C-terminus: uncharacterized protein (167 aa).

Its subcellular location is the plastid. It is found in the chloroplast. This is an uncharacterized protein from Mesostigma viride (Green alga).